The following is a 199-amino-acid chain: Ribosomal RNA large subunit methyltransferase E (199 aa).

S-adenosyl-L-methionine is bound by residues Gly53, Trp55, Asp73, Asp92, and Asp114. Catalysis depends on Lys154, which acts as the Proton acceptor.

This sequence belongs to the class I-like SAM-binding methyltransferase superfamily. RNA methyltransferase RlmE family.

It is found in the cytoplasm. It catalyses the reaction uridine(2552) in 23S rRNA + S-adenosyl-L-methionine = 2'-O-methyluridine(2552) in 23S rRNA + S-adenosyl-L-homocysteine + H(+). Specifically methylates the uridine in position 2552 of 23S rRNA at the 2'-O position of the ribose in the fully assembled 50S ribosomal subunit. This Treponema denticola (strain ATCC 35405 / DSM 14222 / CIP 103919 / JCM 8153 / KCTC 15104) protein is Ribosomal RNA large subunit methyltransferase E.